Here is a 419-residue protein sequence, read N- to C-terminus: Putative nucleobase-ascorbate transporter 9 (419 aa).

The span at Met1–Gly22 shows a compositional bias: gly residues. The segment at Met1 to Glu28 is disordered. The next 10 membrane-spanning stretches (helical) occupy residues Leu64 to Gly84, Val91 to Thr111, Leu113 to Ser133, Ile153 to Trp173, Ser184 to Val204, Gly220 to Val240, Ser273 to Ala293, Arg313 to Ala333, Phe334 to Val354, and Phe370 to Phe390.

It belongs to the nucleobase:cation symporter-2 (NCS2) (TC 2.A.40) family.

The protein resides in the membrane. The sequence is that of Putative nucleobase-ascorbate transporter 9 (NAT9) from Arabidopsis thaliana (Mouse-ear cress).